The primary structure comprises 24 residues: Coenzyme PQQ synthesis protein A (24 aa).

The pyrroloquinoline quinone (Glu-Tyr) cross-link spans 16–20; it reads EVTMY.

Belongs to the PqqA family.

Its pathway is cofactor biosynthesis; pyrroloquinoline quinone biosynthesis. Its function is as follows. Required for coenzyme pyrroloquinoline quinone (PQQ) biosynthesis. PQQ is probably formed by cross-linking a specific glutamate to a specific tyrosine residue and excising these residues from the peptide. The polypeptide is Coenzyme PQQ synthesis protein A (Acinetobacter baumannii (strain SDF)).